The primary structure comprises 104 residues: Replication restart protein PriB (104 aa).

The 101-residue stretch at methionine 1–aspartate 101 folds into the SSB domain.

The protein belongs to the PriB family. Homodimer. Interacts with PriA and DnaT. Component of the replication restart primosome. Primosome assembly occurs via a 'hand-off' mechanism. PriA binds to replication forks, subsequently PriB then DnaT bind; DnaT then displaces ssDNA to generate the helicase loading substrate.

Functionally, involved in the restart of stalled replication forks, which reloads the replicative helicase on sites other than the origin of replication; the PriA-PriB pathway is the major replication restart pathway. During primosome assembly it facilitates complex formation between PriA and DnaT on DNA; stabilizes PriA on DNA. Stimulates the DNA unwinding activity of PriA helicase. This chain is Replication restart protein PriB, found in Salmonella typhi.